Reading from the N-terminus, the 4684-residue chain is Plectin (4684 aa).

Positions Met1–Tyr1470 are globular 1. Phosphoserine is present on residues Phe20 and Arg21. A Phosphotyrosine modification is found at Val26. Residue Gly42 is modified to Phosphoserine. Thr113 carries the post-translational modification Phosphothreonine. Phosphoserine is present on residues Ser125 and Ser149. Positions Glu144 to Arg179 are disordered. An actin-binding region spans residues Asp175 to Pro400. Calponin-homology (CH) domains lie at Arg179–Gln282 and Met295–Pro400. One copy of the Spectrin 1 repeat lies at Leu645–Glu710. The residue at position 720 (Ser720) is a Phosphoserine. Spectrin repeat units lie at residues Lys740–His824 and Leu837–Gln930. The region spanning Arg941–Pro998 is the SH3 domain. The required for interaction with intermediate filament proteins stretch occupies residues Glu964–Cys4574. Position 1047 is a phosphoserine (Ser1047). The Spectrin 4 repeat unit spans residues Arg1315–Ala1415. Ser1435 bears the Phosphoserine mark. Residues Gln1469–Gln2756 adopt a coiled-coil conformation. The central fibrous rod domain stretch occupies residues Ile1471–Ser2755. The tract at residues Arg1618 to Ala1650 is disordered. At Ser1721 the chain carries Phosphoserine. N6-acetyllysine is present on Lys1725. Ser1732 is subject to Phosphoserine. Disordered regions lie at residues Leu1794–Gln1836, Glu2105–Arg2139, and Arg2217–His2307. Basic and acidic residues-rich tracts occupy residues Glu1798–Gln1836, Glu2105–Gln2128, and Arg2217–Ala2258. Residues Glu2259 to Ala2272 show a composition bias toward low complexity. Basic and acidic residues predominate over residues Glu2273–Gln2288. Ser2631 is subject to Phosphoserine. Position 2636 is an N6-acetyllysine (Lys2636). Disordered regions lie at residues Arg2668 to Gln2707 and Leu2763 to Asp2784. Positions Glu2679–Gln2707 are enriched in basic and acidic residues. The tract at residues Gln2756 to Ala4684 is globular 2. Phosphoserine occurs at positions 2782 and 2802. 5 Plectin repeats span residues Arg2826–Ala2863, Leu2864–His2901, His2902–Gly2939, Ile2940–Asn2977, and Ala2981–Gly3015. Thr2886 bears the Phosphothreonine mark. The residue at position 3033 (Tyr3033) is a Phosphotyrosine. Residue Ser3036 is modified to Phosphoserine. N6-acetyllysine occurs at positions 3053 and 3091. 6 Plectin repeats span residues Ser3116–Val3153, Arg3154–Ala3191, Val3192–His3229, Glu3230–Gly3267, Leu3268–Ser3305, and Arg3306–Gly3343. The interval Ala3310–Glu3331 is disordered. Tyr3362 carries the post-translational modification Phosphotyrosine. An N6-acetyllysine modification is found at Lys3420. Plectin repeat units lie at residues Arg3485–Ala3522, Ala3523–His3560, Glu3561–Gly3598, Ile3599–Asn3636, and Ala3640–Gly3674. Ser3580 carries the phosphoserine modification. Thr3785 carries the post-translational modification Phosphothreonine. Plectin repeat units lie at residues Trp3820–Ala3857, Arg3858–His3895, Asp3896–Ala3933, Leu3934–His3971, and Ser3975–Gly4008. The interval Pro3956–Glu4293 is required for interaction with type2 keratins, DES and VIM. Thr4030 is modified (phosphothreonine). At Ser4054 the chain carries Phosphoserine. 7 Plectin repeats span residues Gln4063–Ala4100, Phe4101–Lys4138, Asp4139–Gly4176, Ile4177–Asn4214, Thr4218–Gly4252, Arg4265–Tyr4305, and Thr4319–Leu4356. The segment at Gln4250–Ile4300 is binding to intermediate filaments. Phosphoserine occurs at positions 4382, 4384, 4385, 4386, 4389, 4390, 4391, and 4392. Tyr4393 is modified (phosphotyrosine). Phosphoserine occurs at positions 4396, 4400, and 4406. Plectin repeat units follow at residues Ser4408–Gly4445, Gln4446–Val4483, Asp4484–Gly4521, Gln4522–Ala4559, and Gln4560–Gly4597. At Thr4411 the chain carries Phosphothreonine. Residues Met4505–Cys4574 form a required for efficient interaction with KRT5 and KRT14 heterodimers region. Thr4539 bears the Phosphothreonine; by CDK1 mark. Phosphoserine occurs at positions 4607 and 4613. The span at Tyr4611–Gly4678 shows a compositional bias: low complexity. The disordered stretch occupies residues Tyr4611–Ala4684. At Tyr4615 the chain carries Phosphotyrosine. Phosphoserine occurs at positions 4616, 4618, and 4622. Position 4623 is a phosphothreonine (Thr4623). The tract at residues Gly4625 to Arg4640 is 4 X 4 AA tandem repeats of G-S-R-X. Ser4626 carries the phosphoserine modification. An omega-N-methylarginine mark is found at Arg4627 and Arg4640. Phosphoserine is present on residues Ser4642, Ser4672, and Ser4675.

Belongs to the plakin or cytolinker family. Homodimer or homotetramer. Interacts (via actin-binding domain) with SYNE3. Interacts (via calponin-homology (CH) 1 domain) with VIM (via rod region). Interacts (via N-terminus) with DST isoform 2 (via N-terminus). Interacts with FER. Interacts with TOR1A. Interacts with ANK3. Identified in complexes that contain VIM, EZR, AHNAK, BFSP1, BFSP2, ANK2, PLEC, PRX and spectrin. Interacts with COL17A1. In terms of assembly, interacts with KRT14, heterodimers consisting of KRT8 and KRT18, heterodimers consisting of KRT5 and KRT14, heterodimers consisting of KRT14 and KRT15, and heterodimers consisting of KRT1 and KRT10. Interacts with DES and VIM. Phosphorylated by CDK1; regulates dissociation from intermediate filaments during mitosis. As to expression, widely expressed with highest levels in muscle, heart, placenta and spinal cord.

It is found in the cytoplasm. It localises to the cytoskeleton. Its subcellular location is the cell junction. The protein localises to the hemidesmosome. The protein resides in the cell projection. It is found in the podosome. Interlinks intermediate filaments with microtubules and microfilaments and anchors intermediate filaments to desmosomes or hemidesmosomes. Could also bind muscle proteins such as actin to membrane complexes in muscle. May be involved not only in the filaments network, but also in the regulation of their dynamics. Structural component of muscle. Isoform 9 plays a major role in the maintenance of myofiber integrity. The polypeptide is Plectin (PLEC) (Homo sapiens (Human)).